The sequence spans 103 residues: Sperm-associated antigen 11B (103 aa).

Residues M1–A25 form the signal peptide. A glycan (N-linked (GlcNAc...) asparagine) is linked at N29.

This sequence belongs to the SPAG11 family. In terms of tissue distribution, specifically expressed in caput and proximal corpus of epididymis (at protein level). Present in the epididymal epithelium and on the sperm surface, with a subacrosomal equatorial distribution on the sperm head (at protein level).

The protein localises to the secreted. Has antimicrobial activity against E.coli. Plays a role in the defense response in the male reproductive tract, contributing to sperm maturation, storage and protection. This is Sperm-associated antigen 11B from Homo sapiens (Human).